Reading from the N-terminus, the 103-residue chain is Histone H4 (103 aa).

Positions 1-14 (MSGRGKGGKGLGKG) are enriched in gly residues. The disordered stretch occupies residues 1–20 (MSGRGKGGKGLGKGGAKRHR). Position 2 is an N-acetylserine (S2). N6-acetyl-N6-methyllysine; alternate occurs at positions 6 and 13. Residues 17–21 (KRHRK) mediate DNA binding. Residue K21 is modified to N6-methyllysine.

The protein belongs to the histone H4 family. In terms of assembly, the nucleosome is a histone octamer containing two molecules each of H2A, H2B, H3 and H4 assembled in one H3-H4 heterotetramer and two H2A-H2B heterodimers. The octamer wraps approximately 147 bp of DNA.

It localises to the nucleus. The protein resides in the chromosome. In terms of biological role, core component of nucleosome. Nucleosomes wrap and compact DNA into chromatin, limiting DNA accessibility to the cellular machineries which require DNA as a template. Histones thereby play a central role in transcription regulation, DNA repair, DNA replication and chromosomal stability. DNA accessibility is regulated via a complex set of post-translational modifications of histones, also called histone code, and nucleosome remodeling. This is Histone H4 from Solaster stimpsoni (Striped sun sea star).